The primary structure comprises 349 residues: L-lactate dehydrogenase (349 aa).

A disordered region spans residues 199-219; sequence APEGSIIGADGNPTTDASTMF.

The protein belongs to the LDH2/MDH2 oxidoreductase family.

Its subcellular location is the cytoplasm. The catalysed reaction is (S)-lactate + NAD(+) = pyruvate + NADH + H(+). The protein operates within fermentation; pyruvate fermentation to lactate; (S)-lactate from pyruvate: step 1/1. The sequence is that of L-lactate dehydrogenase (ldh) from Cupriavidus necator (strain ATCC 17699 / DSM 428 / KCTC 22496 / NCIMB 10442 / H16 / Stanier 337) (Ralstonia eutropha).